Consider the following 370-residue polypeptide: Small ribosomal subunit biogenesis GTPase RsgA (370 aa).

The CP-type G domain occupies 97-255 (QTQLDRPPIA…LADTPGFNQP (159 aa)). GTP is bound by residues 146-149 (NKSD) and 197-205 (GPSGVGKSS). Zn(2+) is bound by residues Cys-280, Cys-285, His-287, and Cys-293. The tract at residues 328–370 (TLKLKTKGKGQSQYEPKLESKKYRRTSRRTQVQGLQDLYQEEE) is disordered.

This sequence belongs to the TRAFAC class YlqF/YawG GTPase family. RsgA subfamily. As to quaternary structure, monomer. Associates with 30S ribosomal subunit, binds 16S rRNA. Requires Zn(2+) as cofactor.

Its subcellular location is the cytoplasm. Functionally, one of several proteins that assist in the late maturation steps of the functional core of the 30S ribosomal subunit. Helps release RbfA from mature subunits. May play a role in the assembly of ribosomal proteins into the subunit. Circularly permuted GTPase that catalyzes slow GTP hydrolysis, GTPase activity is stimulated by the 30S ribosomal subunit. The protein is Small ribosomal subunit biogenesis GTPase RsgA of Trichormus variabilis (strain ATCC 29413 / PCC 7937) (Anabaena variabilis).